Consider the following 581-residue polypeptide: DNA primase (581 aa).

Residues 40-64 form a CHC2-type zinc finger; the sequence is CPFHNEKTPSFTVNGEKQFYHCFGC. Positions 259–341 constitute a Toprim domain; sequence QRLLVVEGYM…GRQVRFMFLP (83 aa). Residues Glu265, Asp309, and Asp311 each coordinate Mg(2+).

It belongs to the DnaG primase family. Monomer. Interacts with DnaB. Zn(2+) is required as a cofactor. The cofactor is Mg(2+).

The catalysed reaction is ssDNA + n NTP = ssDNA/pppN(pN)n-1 hybrid + (n-1) diphosphate.. RNA polymerase that catalyzes the synthesis of short RNA molecules used as primers for DNA polymerase during DNA replication. The sequence is that of DNA primase from Salmonella typhimurium (strain LT2 / SGSC1412 / ATCC 700720).